A 541-amino-acid polypeptide reads, in one-letter code: Coiled-coil domain-containing protein 116 (541 aa).

Positions Q79–A102 form a coiled coil. The tract at residues L346 to N397 is disordered. Polar residues predominate over residues D351–T363. The span at T383–R392 shows a compositional bias: basic residues. S394 carries the post-translational modification Phosphoserine.

It localises to the cytoplasm. The protein localises to the cytoskeleton. It is found in the microtubule organizing center. Its subcellular location is the centrosome. In Mus musculus (Mouse), this protein is Coiled-coil domain-containing protein 116 (Ccdc116).